A 693-amino-acid chain; its full sequence is Translation factor GUF1 homolog, mitochondrial (693 aa).

Residues 51–63 show a composition bias toward polar residues; that stretch reads SSSSTEKPTTSGT. Positions 51-78 are disordered; the sequence is SSSSTEKPTTSGTINGGGGKQKAASQPK. Residues 88 to 270 form the tr-type G domain; that stretch reads QKIRNFSIIA…RIVQMVPPPP (183 aa). GTP contacts are provided by residues 97–104, 163–167, and 217–220; these read AHIDHGKS, DTPGH, and NKID.

This sequence belongs to the TRAFAC class translation factor GTPase superfamily. Classic translation factor GTPase family. LepA subfamily.

It localises to the mitochondrion inner membrane. The enzyme catalyses GTP + H2O = GDP + phosphate + H(+). Its function is as follows. Promotes mitochondrial protein synthesis. May act as a fidelity factor of the translation reaction, by catalyzing a one-codon backward translocation of tRNAs on improperly translocated ribosomes. Binds to mitochondrial ribosomes in a GTP-dependent manner. This is Translation factor GUF1 homolog, mitochondrial from Phaeodactylum tricornutum (strain CCAP 1055/1).